Consider the following 161-residue polypeptide: Nucleotide-binding protein Bd0338 (161 aa).

This sequence belongs to the YajQ family.

Its function is as follows. Nucleotide-binding protein. In Bdellovibrio bacteriovorus (strain ATCC 15356 / DSM 50701 / NCIMB 9529 / HD100), this protein is Nucleotide-binding protein Bd0338.